The chain runs to 395 residues: Elongation factor Tu (395 aa).

A tr-type G domain is found at 10–204 (KPHVNIGTIG…AVDSYIPTPQ (195 aa)). The segment at 19–26 (GHVDHGKT) is G1. Residue 19-26 (GHVDHGKT) participates in GTP binding. T26 lines the Mg(2+) pocket. The G2 stretch occupies residues 60–64 (GITIN). A G3 region spans residues 81-84 (DCPG). Residues 81–85 (DCPGH) and 136–139 (NKCD) each bind GTP. The segment at 136–139 (NKCD) is G4. The G5 stretch occupies residues 174 to 176 (SAL).

It belongs to the TRAFAC class translation factor GTPase superfamily. Classic translation factor GTPase family. EF-Tu/EF-1A subfamily. As to quaternary structure, monomer.

The protein resides in the cytoplasm. The enzyme catalyses GTP + H2O = GDP + phosphate + H(+). GTP hydrolase that promotes the GTP-dependent binding of aminoacyl-tRNA to the A-site of ribosomes during protein biosynthesis. The sequence is that of Elongation factor Tu from Symbiobacterium thermophilum (strain DSM 24528 / JCM 14929 / IAM 14863 / T).